The chain runs to 365 residues: Geissoschizine synthase (365 aa).

Cys51 is a Zn(2+) binding site. Residue Asn52 participates in NADP(+) binding. Zn(2+) contacts are provided by His73, Glu74, Cys104, Cys107, Cys110, Cys118, and Cys169. Residues Leu195, Gly197, Leu198, Ser217, Thr218, Ser219, Lys222, Arg262, Val281, Ala283, Ser305, Thr307, and Arg352 each contribute to the NADP(+) site.

The protein belongs to the zinc-containing alcohol dehydrogenase family. Class-III subfamily. Homodimer. The cofactor is Zn(2+). As to expression, mainly expressed in roots and, to a lower level, in leaves.

The catalysed reaction is (19E)-geissoschizine + NADP(+) = 4,21-dehydrogeissoschizine + NADPH. It functions in the pathway alkaloid biosynthesis; ajmaline biosynthesis. Its function is as follows. Alcohol dehydrogenase involved in the biosynthesis of ajmaline-type monoterpenoid indole alkaloids (MIAs) natural products, important plant-derived pharmaceuticals used in the therapy of heart disorders. Catalyzes iminium reduction on 4,21-dehydrogeissoschizine to produce 19E-geissoschizine, precursor of vomilenine, an intermediate chemical in the biosynthesis of ajmaline. The chain is Geissoschizine synthase from Rauvolfia serpentina (Serpentine wood).